We begin with the raw amino-acid sequence, 336 residues long: Dihydroorotate dehydrogenase (quinone) (336 aa).

FMN contacts are provided by residues 62–66 (AGLDK) and Thr-86. Lys-66 is a substrate binding site. 111-115 (NRMGF) serves as a coordination point for substrate. FMN contacts are provided by Asn-139 and Asn-172. A substrate-binding site is contributed by Asn-172. Residue Ser-175 is the Nucleophile of the active site. Position 177 (Asn-177) interacts with substrate. Residues Lys-217 and Thr-245 each coordinate FMN. Position 246–247 (246–247 (NT)) interacts with substrate. Residues Gly-268, Gly-297, and 318–319 (YS) each bind FMN.

It belongs to the dihydroorotate dehydrogenase family. Type 2 subfamily. As to quaternary structure, monomer. FMN serves as cofactor.

The protein resides in the cell membrane. It catalyses the reaction (S)-dihydroorotate + a quinone = orotate + a quinol. It participates in pyrimidine metabolism; UMP biosynthesis via de novo pathway; orotate from (S)-dihydroorotate (quinone route): step 1/1. Functionally, catalyzes the conversion of dihydroorotate to orotate with quinone as electron acceptor. The sequence is that of Dihydroorotate dehydrogenase (quinone) from Enterobacter sp. (strain 638).